A 313-amino-acid polypeptide reads, in one-letter code: tRNA dimethylallyltransferase (313 aa).

Residue 11-18 (GPTAGGKT) participates in ATP binding. 13 to 18 (TAGGKT) contributes to the substrate binding site. Interaction with substrate tRNA stretches follow at residues 36–39 (DSAL), 160–164 (QRIGR), and 243–248 (RCVGYR).

Belongs to the IPP transferase family. As to quaternary structure, monomer. The cofactor is Mg(2+).

The enzyme catalyses adenosine(37) in tRNA + dimethylallyl diphosphate = N(6)-dimethylallyladenosine(37) in tRNA + diphosphate. In terms of biological role, catalyzes the transfer of a dimethylallyl group onto the adenine at position 37 in tRNAs that read codons beginning with uridine, leading to the formation of N6-(dimethylallyl)adenosine (i(6)A). This is tRNA dimethylallyltransferase from Neisseria meningitidis serogroup C / serotype 2a (strain ATCC 700532 / DSM 15464 / FAM18).